The following is a 459-amino-acid chain: 5-hydroxytryptamine receptor 2C (459 aa).

The signal sequence occupies residues 1–32 (MVNLGTAVRSLLVHLIGLLVWQFDISISPVAA). Residues 33–56 (IVTDTFNSSDGGRLFQFPDGVQNW) are Extracellular-facing. Residues 57–81 (PALSIVVIIIMTIGGNILVIMAVSM) form a helical membrane-spanning segment. The Cytoplasmic portion of the chain corresponds to 82 to 87 (EKKLHN). A helical membrane pass occupies residues 88–112 (ATNYFLMSLAIADMLVGLLVMPLSL). The Extracellular portion of the chain corresponds to 113–129 (LAILYDYVWPLPRYLCP). Cys-128 and Cys-208 form a disulfide bridge. A helical transmembrane segment spans residues 130-152 (VWISLDVLFSTASIMHLCAISLD). Ergotamine is bound at residue Thr-140. The short motif at 152–154 (DRY) is the DRY motif; important for ligand-induced conformation changes element. The Cytoplasmic portion of the chain corresponds to 153-168 (RYVAIRNPIEHSRFNS). Residues 169 to 190 (RTKAIMKIAIVWAISIGVSVPI) traverse the membrane as a helical segment. The Extracellular segment spans residues 191-214 (PVIGLRDESKVFVNNTTCVLNDPN). N-linked (GlcNAc...) asparagine glycans are attached at residues Asn-204 and Asn-205. Position 210 (Leu-210) interacts with ergotamine. Residues 215–237 (FVLIGSFVAFFIPLTIMVITYFL) form a helical membrane-spanning segment. The Cytoplasmic portion of the chain corresponds to 238–312 (TIYVLRRQTL…AINNEKKASK (75 aa)). Positions 274-302 (DEEENAPNPNPDQKPRRKKKEKRPRGTMQ) are disordered. A compositionally biased stretch (basic residues) spans 288–298 (PRRKKKEKRPR). The chain crosses the membrane as a helical span at residues 313–337 (VLGIVFFVFLIMWCPFFITNILSVL). A disulfide bridge links Cys-338 with Cys-342. Residues 338–348 (CGKACNQKLME) are Extracellular-facing. The chain crosses the membrane as a helical span at residues 349–371 (KLLNVFVWIGYVCSGINPLVYTL). The short motif at 365 to 369 (NPLVY) is the NPxxY motif; important for ligand-induced conformation changes and signaling element. Residues 372 to 459 (FNKIYRRAFS…NVVSERISSV (88 aa)) lie on the Cytoplasmic side of the membrane. The PDZ-binding signature appears at 457 to 459 (SSV).

It belongs to the G-protein coupled receptor 1 family. As to quaternary structure, interacts with MPDZ. Interacts with ARRB2. Interacts with MPP3; this interaction stabilizes the receptor at the plasma membrane and prevents the desensitization of the HTR2C receptor-mediated calcium response. Detected in brain cortex, hypothalamus, brainstem and arcuate nucleus. Detected in the paraventricular nucleus of the hypothalamus.

Its subcellular location is the cell membrane. G-protein coupled receptor for 5-hydroxytryptamine (serotonin). Also functions as a receptor for various drugs and psychoactive substances, including ergot alkaloid derivatives, 1-2,5,-dimethoxy-4-iodophenyl-2-aminopropane (DOI) and lysergic acid diethylamide (LSD). Ligand binding causes a conformation change that triggers signaling via guanine nucleotide-binding proteins (G proteins) and modulates the activity of downstream effectors. HTR2C is coupled to G(q)/G(11) G alpha proteins and activates phospholipase C-beta, releasing diacylglycerol (DAG) and inositol 1,4,5-trisphosphate (IP3) second messengers that modulate the activity of phosphatidylinositol 3-kinase and promote the release of Ca(2+) ions from intracellular stores, respectively. Beta-arrestin family members inhibit signaling via G proteins and mediate activation of alternative signaling pathways. Regulates neuronal activity via the activation of short transient receptor potential calcium channels in the brain, and thereby modulates the activation of pro-opiomelanocortin neurons and the release of CRH that then regulates the release of corticosterone. Plays a role in the regulation of appetite and eating behavior, responses to anxiogenic stimuli and stress. Plays a role in insulin sensitivity and glucose homeostasis. The chain is 5-hydroxytryptamine receptor 2C from Mus musculus (Mouse).